Here is a 313-residue protein sequence, read N- to C-terminus: Porphobilinogen deaminase (313 aa).

The residue at position 242 (C242) is an S-(dipyrrolylmethanemethyl)cysteine.

Belongs to the HMBS family. Monomer. Dipyrromethane is required as a cofactor.

The catalysed reaction is 4 porphobilinogen + H2O = hydroxymethylbilane + 4 NH4(+). The protein operates within porphyrin-containing compound metabolism; protoporphyrin-IX biosynthesis; coproporphyrinogen-III from 5-aminolevulinate: step 2/4. Tetrapolymerization of the monopyrrole PBG into the hydroxymethylbilane pre-uroporphyrinogen in several discrete steps. This chain is Porphobilinogen deaminase, found in Escherichia coli O6:H1 (strain CFT073 / ATCC 700928 / UPEC).